A 202-amino-acid chain; its full sequence is Peptide methionine sulfoxide reductase A3 (202 aa).

Positions 1 to 34 (MNILNRLGLGSSGQTNMDPSPIAQGNDDDTPAPG) are disordered. Residue S189 is modified to Phosphoserine.

It belongs to the MsrA Met sulfoxide reductase family. As to expression, expressed in rosette and cauline leaves, and at lower levels in roots, stems and flowers (at protein level).

The protein resides in the cytoplasm. It localises to the cytosol. It carries out the reaction L-methionyl-[protein] + [thioredoxin]-disulfide + H2O = L-methionyl-(S)-S-oxide-[protein] + [thioredoxin]-dithiol. It catalyses the reaction [thioredoxin]-disulfide + L-methionine + H2O = L-methionine (S)-S-oxide + [thioredoxin]-dithiol. Its function is as follows. Catalyzes the reduction of methionine sulfoxide (MetSO) to methionine in proteins. Plays a protective role against oxidative stress by restoring activity to proteins that have been inactivated by methionine oxidation. May prevent cellular oxidative damage due to light exposure. MSRA family specifically reduces the MetSO S-enantiomer. In Arabidopsis thaliana (Mouse-ear cress), this protein is Peptide methionine sulfoxide reductase A3 (MSRA3).